The chain runs to 839 residues: AMP deaminase (839 aa).

The helical transmembrane segment at 8–28 threads the bilayer; the sequence is LALAALFGASFVAVSGFFMHF. Residues 40–167 form a disordered region; it reads ERKENPDGDE…DDDDNLTNSE (128 aa). Gly residues predominate over residues 85–94; that stretch reads DGGGGGGGDT. Phosphoserine occurs at positions 134 and 140. A compositionally biased stretch (acidic residues) spans 153–162; it reads SVEESDDDDN. Ser-203 is subject to Phosphoserine. ATP is bound at residue 289 to 296; it reads AHYPQGKS. Zn(2+)-binding residues include His-391 and His-393. Substrate is bound by residues His-393 and 462-467; that span reads KFNLKY. Residue His-659 participates in Zn(2+) binding. Glu-662 contacts substrate. The active-site Proton acceptor is the His-681. Asp-736 contacts Zn(2+). Residue 737–740 participates in substrate binding; it reads DPLQ.

This sequence belongs to the metallo-dependent hydrolases superfamily. Adenosine and AMP deaminases family. In terms of assembly, homodimer. Interacts with AHK4. Interacts with EER5. Requires Zn(2+) as cofactor. Expressed in seedlings, roots, leaves, flowers, pollen grains, pollen tubes and siliques, and at a lower level in stems.

The protein localises to the membrane. The protein resides in the microsome membrane. The enzyme catalyses AMP + H2O + H(+) = IMP + NH4(+). The protein operates within purine metabolism; IMP biosynthesis via salvage pathway; IMP from AMP: step 1/1. Activated by ATP. Activated by sulfate ions (in vitro). Inhibited by phosphate ions. AMP deaminase plays a critical role in energy metabolism. Essential for the transition from zygote to embryo. This is AMP deaminase from Arabidopsis thaliana (Mouse-ear cress).